We begin with the raw amino-acid sequence, 411 residues long: UPF0761 membrane protein PA0951 (411 aa).

Helical transmembrane passes span 36–56, 92–112, 132–152, 174–194, 207–229, and 244–264; these read LFAV…IPAF, HLTW…LVTI, FLLY…GFAV, LLGL…YSAV, GGVF…VSLF, and IFLL…VLVC.

This sequence belongs to the UPF0761 family.

The protein localises to the cell inner membrane. In Pseudomonas aeruginosa (strain ATCC 15692 / DSM 22644 / CIP 104116 / JCM 14847 / LMG 12228 / 1C / PRS 101 / PAO1), this protein is UPF0761 membrane protein PA0951.